The sequence spans 105 residues: UPF0148 protein PH0795 (105 aa).

The protein belongs to the UPF0148 family.

In Pyrococcus horikoshii (strain ATCC 700860 / DSM 12428 / JCM 9974 / NBRC 100139 / OT-3), this protein is UPF0148 protein PH0795.